The following is a 117-amino-acid chain: Large ribosomal subunit protein bL20 (117 aa).

Belongs to the bacterial ribosomal protein bL20 family.

Binds directly to 23S ribosomal RNA and is necessary for the in vitro assembly process of the 50S ribosomal subunit. It is not involved in the protein synthesizing functions of that subunit. This Gloeothece citriformis (strain PCC 7424) (Cyanothece sp. (strain PCC 7424)) protein is Large ribosomal subunit protein bL20.